Consider the following 358-residue polypeptide: Trace amine-associated receptor 7b (358 aa).

At 1–47 (MATDNDSFPWDQDSILSSDMFSATSTELCYENLNRSCVRSPYSPGPR) the chain is on the extracellular side. N-linked (GlcNAc...) asparagine glycosylation is found at asparagine 5 and asparagine 34. 2 cysteine pairs are disulfide-bonded: cysteine 37–cysteine 201 and cysteine 120–cysteine 205. Residues 48 to 68 (LILYAVFGFGAALAVCGNLLV) traverse the membrane as a helical segment. Over 69–83 (MTSILHFRQLHSPAN) the chain is Cytoplasmic. Residues 84–104 (FLVVSLACADFLVGLTVMPFS) form a helical membrane-spanning segment. At 105–121 (TVRSVEGCWYFGESYCK) the chain is on the extracellular side. The helical transmembrane segment at 122–143 (LHTCFDVSFCYCSIFHLCFISV) threads the bilayer. Residues 144–166 (DRYIAVSDPLTYPTRFTAFVSGK) lie on the Cytoplasmic side of the membrane. The helical transmembrane segment at 167–187 (CITFSWLLSTIYGFSLLYTGA) threads the bilayer. Over 188–212 (NEAGLEDLVSALTCVGGCQLAVNQS) the chain is Extracellular. Asparagine 210 carries an N-linked (GlcNAc...) asparagine glycan. A helical membrane pass occupies residues 213–233 (WVFINFLLFLIPTLVMITVYS). At 234-274 (KIFLIAKQQAQNIEKMSKQTARASDSYKDRVAKRERKAAKT) the chain is on the cytoplasmic side. Residues 275–295 (LGIAVAAFLLSWLPYFIDSII) traverse the membrane as a helical segment. Residues 296 to 309 (DAFLGFITPTYVYE) lie on the Extracellular side of the membrane. Residues 310–333 (ILVWIAYYNSAMNPLIYAFFYPWF) form a helical membrane-spanning segment. Over 334-358 (RKAIKLIVSGKVLRENSSTTNLFPE) the chain is Cytoplasmic.

Belongs to the G-protein coupled receptor 1 family. In terms of tissue distribution, specifically expressed in neurons of the olfactory epithelium.

It is found in the cell membrane. Olfactory receptor specific for N,N-dimethylalkylamines trace amines, such as N,N-dimethylcyclohexylamine. Trace amine compounds are enriched in animal body fluids and act on trace amine-associated receptors (TAARs) to elicit both intraspecific and interspecific innate behaviors. Ligand-binding causes a conformation change that triggers signaling via G(s)-class of G alpha proteins (GNAL or GNAS). This chain is Trace amine-associated receptor 7b, found in Mus musculus (Mouse).